Consider the following 175-residue polypeptide: Putative carbonic anhydrase-like protein YbcF (175 aa).

This sequence belongs to the beta-class carbonic anhydrase family.

This Bacillus subtilis (strain 168) protein is Putative carbonic anhydrase-like protein YbcF (ybcF).